We begin with the raw amino-acid sequence, 86 residues long: Mu-theraphotoxin-Cg2a 1 (86 aa).

The N-terminal stretch at 1–21 (MKVSVVITLAVLGIMFVWASA) is a signal peptide. Residues 22–50 (AELEERGSDQRDSPAWLKSMERIFQSEER) constitute a propeptide that is removed on maturation. 3 cysteine pairs are disulfide-bonded: Cys-52–Cys-66, Cys-59–Cys-71, and Cys-65–Cys-78. Phe-84 carries the phenylalanine amide modification.

The protein belongs to the neurotoxin 10 (Hwtx-1) family. 37 (Jztx-31) subfamily. In terms of tissue distribution, expressed by the venom gland.

It is found in the secreted. Inhibits both peak current and fast inactivation of voltage-gated sodium channels (Nav) channels. Inhibits the inactivation of Nav on DRG neurons (EC(50)=1.77 uM) and peak current of cardiac myocytes (IC(50)=0.90 uM). The sequence is that of Mu-theraphotoxin-Cg2a 1 from Chilobrachys guangxiensis (Chinese earth tiger tarantula).